Here is a 223-residue protein sequence, read N- to C-terminus: Triosephosphate isomerase (223 aa).

6–8 (NLK) provides a ligand contact to substrate. Residue His-86 is the Electrophile of the active site. Glu-151 functions as the Proton acceptor in the catalytic mechanism. Substrate contacts are provided by Gly-157 and Ser-187.

It belongs to the triosephosphate isomerase family. As to quaternary structure, homodimer.

The protein resides in the cytoplasm. The enzyme catalyses D-glyceraldehyde 3-phosphate = dihydroxyacetone phosphate. It participates in carbohydrate biosynthesis; gluconeogenesis. It functions in the pathway carbohydrate degradation; glycolysis; D-glyceraldehyde 3-phosphate from glycerone phosphate: step 1/1. Its function is as follows. Involved in the gluconeogenesis. Catalyzes stereospecifically the conversion of dihydroxyacetone phosphate (DHAP) to D-glyceraldehyde-3-phosphate (G3P). The protein is Triosephosphate isomerase of Campylobacter jejuni subsp. doylei (strain ATCC BAA-1458 / RM4099 / 269.97).